The sequence spans 1135 residues: Eukaryotic translation initiation factor 3 subunit A (1135 aa).

One can recognise a PCI domain in the interval 319-501; the sequence is LQRMAAHVLL…NSIYFGTDLT (183 aa). Composition is skewed to basic and acidic residues over residues 588–623 and 829–899; these read QNNA…EERE and AAEE…RGGD. 2 disordered regions span residues 588-631 and 829-1135; these read QNNA…QNEI and AAEE…VKRR. Serine 908 bears the Phosphoserine mark. Composition is skewed to basic and acidic residues over residues 920 to 971, 985 to 1045, 1053 to 1081, and 1104 to 1125; these read ERNE…EPDS, SRDD…EPQR, DAPR…RGDQ, and AREE…KAAD.

The protein belongs to the eIF-3 subunit A family. In terms of assembly, component of the eukaryotic translation initiation factor 3 (eIF-3) complex. The eIF-3 complex interacts with pix.

It is found in the cytoplasm. Its function is as follows. RNA-binding component of the eukaryotic translation initiation factor 3 (eIF-3) complex, which is involved in protein synthesis of a specialized repertoire of mRNAs and, together with other initiation factors, stimulates binding of mRNA and methionyl-tRNAi to the 40S ribosome. The eIF-3 complex specifically targets and initiates translation of a subset of mRNAs involved in cell proliferation. The chain is Eukaryotic translation initiation factor 3 subunit A from Drosophila erecta (Fruit fly).